Consider the following 799-residue polypeptide: Protein translocase subunit SecA (799 aa).

Residues glutamine 85, 103–107 (GEGKT), and aspartate 504 each bind ATP.

Belongs to the SecA family. In terms of assembly, monomer and homodimer. Part of the essential Sec protein translocation apparatus which comprises SecA, SecYEG and auxiliary proteins SecDF. Other proteins may also be involved.

Its subcellular location is the cell membrane. It localises to the cytoplasm. It carries out the reaction ATP + H2O + cellular proteinSide 1 = ADP + phosphate + cellular proteinSide 2.. Part of the Sec protein translocase complex. Interacts with the SecYEG preprotein conducting channel. Has a central role in coupling the hydrolysis of ATP to the transfer of proteins into and across the cell membrane, serving as an ATP-driven molecular motor driving the stepwise translocation of polypeptide chains across the membrane. The sequence is that of Protein translocase subunit SecA from Lactobacillus gasseri (strain ATCC 33323 / DSM 20243 / BCRC 14619 / CIP 102991 / JCM 1131 / KCTC 3163 / NCIMB 11718 / NCTC 13722 / AM63).